Consider the following 396-residue polypeptide: Elongation factor Tu (396 aa).

One can recognise a tr-type G domain in the interval 10–206; it reads KPHVNVGTIG…ALDTYIPEPE (197 aa). The segment at 19-26 is G1; sequence GHVDHGKT. 19-26 contacts GTP; sequence GHVDHGKT. Mg(2+) is bound at residue Thr26. A G2 region spans residues 60–64; sequence GITIN. A G3 region spans residues 81–84; sequence DCPG. GTP contacts are provided by residues 81 to 85 and 136 to 139; these read DCPGH and NKCD. The G4 stretch occupies residues 136 to 139; the sequence is NKCD. The interval 174-176 is G5; the sequence is SAL.

This sequence belongs to the TRAFAC class translation factor GTPase superfamily. Classic translation factor GTPase family. EF-Tu/EF-1A subfamily. As to quaternary structure, monomer.

The protein resides in the cytoplasm. The enzyme catalyses GTP + H2O = GDP + phosphate + H(+). Functionally, GTP hydrolase that promotes the GTP-dependent binding of aminoacyl-tRNA to the A-site of ribosomes during protein biosynthesis. In Acinetobacter baylyi (strain ATCC 33305 / BD413 / ADP1), this protein is Elongation factor Tu.